The sequence spans 262 residues: MTKIPPGEPDELFDAADERGFFPEKRTRNSPATAPAPATDTHYHGHRDRLRARYREHGDAALADYEILELILFRLIPRRDTKPIAKALLDRFGTLAAVFGAPLHLLQEVKGVGESVALDLKLVATASHRMLRSELRNKQVLSSWSAVIDYCHAAMAHETKEQFRILFLDKRNTLIADEVQQQGTIDHTPVYPREVVKRALELSATALILVHNHPSGDPTPSRADIDMTKLIAEAAKPLGIALHDHVIIGKDGHVSLKGLRLF.

The tract at residues 23 to 44 (PEKRTRNSPATAPAPATDTHYH) is disordered. Residues 31-40 (PATAPAPATD) show a composition bias toward low complexity. The MPN domain maps to 140-262 (VLSSWSAVID…HVSLKGLRLF (123 aa)). Residues His-211, His-213, and Asp-224 each contribute to the Zn(2+) site. Positions 211-224 (HNHPSGDPTPSRAD) match the JAMM motif motif.

The protein belongs to the UPF0758 family.

The protein is UPF0758 protein R01728 of Rhizobium meliloti (strain 1021) (Ensifer meliloti).